The chain runs to 193 residues: MAVPASPQHPRGYGILLLTLLLKALATTASACNHLRPQDATFSHDSLQLLRDMAPTLPQLCPQHNASCSFNDTILDTSNTRQADKTTHDILQHLFKILSSPSTPAHWNDSQRQSLLNRIHRYTQHLEQCLDSSDTRSRTRWPRNLHLTIKKHFSCLHTFLQDNDYSACAWEHVRLQARAWFLHIHNLTGNTRT.

The signal sequence occupies residues 1-31 (MAVPASPQHPRGYGILLLTLLLKALATTASA). Disulfide bonds link Cys-32–Cys-129, Cys-61–Cys-155, and Cys-68–Cys-168. N-linked (GlcNAc...) asparagine glycosylation is found at Asn-65, Asn-71, Asn-108, and Asn-186.

It belongs to the alpha/beta interferon family.

Its subcellular location is the secreted. Has antiviral activities. In Gallus gallus (Chicken), this protein is Interferon type A1/A2 (IFNA1).